Reading from the N-terminus, the 471-residue chain is O-acetyltransferase astG (471 aa).

The protein belongs to the fumigaclavine B O-acetyltransferase family. Monomer.

It carries out the reaction dideacetyl astellolide A + acetyl-CoA = 14-deacetyl astellolide A + CoA. It catalyses the reaction dideacetyl astellolide B + acetyl-CoA = 14-deacetyl astellolide B + CoA. Its pathway is secondary metabolite biosynthesis; terpenoid biosynthesis. Functionally, O-acetyltransferase; part of the gene cluster that mediates the biosynthesis of astellolides, drimane-type sesquiterpene esters that show antimicrobial, anti-inflammatory, and anti-tumor activities. The first step in astellolide biosynthesis is performed by the sesquiterpene cyclase astC that catalyzes the formation of drimanyl pyrophosphate from farnesyl pyrophosphate. Drimanyl pyrophosphate is then dephosphorylated by the sesquiterpene phosphatase astI to produce drimanyl monophosphate which is further dephosphorylated to drim-8-ene-11-ol by atsK. Drim-8-ene-11-ol is converted to confertifolin, probably by the cytochrome P450 monooxygenase astD and/or the dehydrogenase astE. The cytochrome P450 monooxygenases astB, astF and astJ then hydroxylate confertifolin at C6, C14, or C15 to form trihydroxy confertifolin. The nonribosomal peptide synthetase astA catalyzes ester bond formation between trihydroxy contifolin and benzoic acid (BA) or 4-hydroxy benzoic acid (4HBA), leading to the formation of dideacetyl astellolides A and B, respectively. Finally, the O-acetyltransferase astG converts dideacetyl astellolides A and B into deacetyl astellolides A and B. The polypeptide is O-acetyltransferase astG (Aspergillus oryzae (strain ATCC 42149 / RIB 40) (Yellow koji mold)).